The primary structure comprises 1773 residues: Disco-interacting protein 2 (1773 aa).

Residues 3–110 (HTASLPGYVR…QRHSKKIDFH (108 aa)) form the DMAP1-binding domain. Phosphotyrosine occurs at positions 60 and 61. Disordered regions lie at residues 112–185 (QAAM…YHSE) and 198–319 (LKGR…PLSS). Composition is skewed to polar residues over residues 113–125 (AAMS…QSGN) and 146–165 (YQNT…NNSQ). A compositionally biased stretch (basic residues) spans 166 to 175 (HRQRRTQRKV). Residues 176–185 (THNEKRYHSE) show a composition bias toward basic and acidic residues. Over residues 224–236 (DELDSSTDDESIP) the composition is skewed to acidic residues. Residues 241-253 (SPDKEYNYPRDHI) are compositionally biased toward basic and acidic residues. Over residues 272–297 (SMGSQQHARTDVKQNQITNQKYTAPN) the composition is skewed to polar residues.

The protein belongs to the DIP2 family. Interacts with Disco. As to expression, expressed in the developing nervous system. Ubiquitously expressed in the developing brain. Within the mushroom body, a higher level is detected in the core of lobes and peduncle in the late third instar larva. Detected in whole mushroom body neuron structures at 48 hours after puparium formation and during later stages.

It localises to the cell membrane. Its function is as follows. Required for precise axonal bifurcation in mushroom body neurons by suppressing ectopic bifurcation and regulating the guidance of sister axons. May function by regulating expression of tdp1. Acts downstream of the serine/threonine-protein kinase Bsk to modulate the direction of axon projection. May play a role in fatty acid metabolism. This is Disco-interacting protein 2 from Drosophila melanogaster (Fruit fly).